The chain runs to 176 residues: Cystatin-related protein 2 (176 aa).

Residues methionine 1 to alanine 26 form the signal peptide. A propeptide spanning residues lysine 27–arginine 30 is cleaved from the precursor. N-linked (GlcNAc...) asparagine glycosylation is present at asparagine 71. 2 disulfide bridges follow: cysteine 129/cysteine 139 and cysteine 153/cysteine 173.

Belongs to the cystatin family. As to expression, prostate.

The chain is Cystatin-related protein 2 (Crp2) from Rattus norvegicus (Rat).